The following is a 97-amino-acid chain: Aspartyl/glutamyl-tRNA(Asn/Gln) amidotransferase subunit C (97 aa).

Belongs to the GatC family. In terms of assembly, heterotrimer of A, B and C subunits.

The catalysed reaction is L-glutamyl-tRNA(Gln) + L-glutamine + ATP + H2O = L-glutaminyl-tRNA(Gln) + L-glutamate + ADP + phosphate + H(+). It carries out the reaction L-aspartyl-tRNA(Asn) + L-glutamine + ATP + H2O = L-asparaginyl-tRNA(Asn) + L-glutamate + ADP + phosphate + 2 H(+). In terms of biological role, allows the formation of correctly charged Asn-tRNA(Asn) or Gln-tRNA(Gln) through the transamidation of misacylated Asp-tRNA(Asn) or Glu-tRNA(Gln) in organisms which lack either or both of asparaginyl-tRNA or glutaminyl-tRNA synthetases. The reaction takes place in the presence of glutamine and ATP through an activated phospho-Asp-tRNA(Asn) or phospho-Glu-tRNA(Gln). This Prochlorococcus marinus (strain MIT 9313) protein is Aspartyl/glutamyl-tRNA(Asn/Gln) amidotransferase subunit C.